An 89-amino-acid polypeptide reads, in one-letter code: Phosphocarrier protein HPr (89 aa).

Positions 2–89 constitute an HPr domain; that stretch reads AKFSAIITDK…TMIDTALIQG (88 aa). Catalysis depends on His15, which acts as the Pros-phosphohistidine intermediate. Residue Ser46 is modified to Phosphoserine; by HPrK/P.

It belongs to the HPr family.

The protein localises to the cytoplasm. Phosphorylation on Ser-46 inhibits the phosphoryl transfer from enzyme I to HPr. In terms of biological role, general (non sugar-specific) component of the phosphoenolpyruvate-dependent sugar phosphotransferase system (sugar PTS). This major carbohydrate active-transport system catalyzes the phosphorylation of incoming sugar substrates concomitantly with their translocation across the cell membrane. The phosphoryl group from phosphoenolpyruvate (PEP) is transferred to the phosphoryl carrier protein HPr by enzyme I. Phospho-HPr then transfers it to the PTS EIIA domain. Its function is as follows. P-Ser-HPr interacts with the catabolite control protein A (CcpA), forming a complex that binds to DNA at the catabolite response elements cre, operator sites preceding a large number of catabolite-regulated genes. Thus, P-Ser-HPr is a corepressor in carbon catabolite repression (CCR), a mechanism that allows bacteria to coordinate and optimize the utilization of available carbon sources. P-Ser-HPr also plays a role in inducer exclusion, in which it probably interacts with several non-PTS permeases and inhibits their transport activity. The polypeptide is Phosphocarrier protein HPr (ptsH) (Mycoplasma capricolum subsp. capricolum (strain California kid / ATCC 27343 / NCTC 10154)).